The following is a 764-amino-acid chain: Thyrotropin receptor (764 aa).

The signal sequence occupies residues 1 to 20; the sequence is MRPPPLLHLALLLALPRSLG. The Extracellular segment spans residues 21-413; that stretch reads GKGCPSPPCE…EFNPCEDIMG (393 aa). A disulfide bond links C31 and C41. N-linked (GlcNAc...) asparagine glycans are attached at residues N77 and N99. 6 LRR repeats span residues 125 to 149, 150 to 174, 176 to 199, 201 to 223, 225 to 248, and 250 to 271; these read LPLLKFLGIFNTGLGVFPDVTKVYS, TDVFFILEITDNPYMASIPANAFQG, CNETLTLKLYNNGFTSIQGHAFNG, KLDAVYLNKNKYLSAIDKDAFGG, YSGPTLLDVSYTSVTALPSKGLEH, and KELIARNTWTLKKLPLSLSFLH. 2 N-linked (GlcNAc...) asparagine glycosylation sites follow: N177 and N198. A glycan (N-linked (GlcNAc...) asparagine) is linked at N302. The residue at position 385 (Y385) is a Sulfotyrosine. The chain crosses the membrane as a helical span at residues 414-441; the sequence is YKFLRIVVWFVSLLALLGNVFVLIVLLT. Over 442–450 the chain is Cytoplasmic; that stretch reads SHYKLTVPR. Residues 451-473 traverse the membrane as a helical segment; it reads FLMCNLAFADFCMGMYLLLIASV. Residues 474-494 lie on the Extracellular side of the membrane; that stretch reads DLYTHSEYYNHAIDWQTGPGC. Cysteines 494 and 569 form a disulfide. A helical transmembrane segment spans residues 495–517; the sequence is NTAGFFTVFASELSVYTLTVITL. The Cytoplasmic portion of the chain corresponds to 518–537; sequence ERWYAITFAMRLDRKIRLRH. The helical transmembrane segment at 538-560 threads the bilayer; it reads AYAIMVGGWVCCFLLALLPLVGI. Residues 561 to 580 lie on the Extracellular side of the membrane; that stretch reads SSYAKVSICLPMDTETPLAL. A helical transmembrane segment spans residues 581–602; sequence AYIILVLLLNIVAFIIVCSCYV. Residues 603–625 lie on the Cytoplasmic side of the membrane; the sequence is KIYITVRNPQYNPGDKDTKIAKR. A helical membrane pass occupies residues 626–649; that stretch reads MAVLIFTDFMCMAPISFYALSALM. The Extracellular portion of the chain corresponds to 650–660; that stretch reads NKPLITVTNSK. A helical membrane pass occupies residues 661-682; the sequence is ILLVLFYPLNSCANPFLYAIFT. The Cytoplasmic segment spans residues 683 to 764; the sequence is KAFQRDVFIL…ISKEYNQTVL (82 aa). A PDZ-binding motif is present at residues 762-764; it reads TVL.

Belongs to the G-protein coupled receptor 1 family. FSH/LSH/TSH subfamily. As to quaternary structure, interacts with heterodimer GPHA2:GPHB5; this interaction stimulates cAMP production. Interacts (via the PDZ-binding motif) with SCRIB; regulates TSHR trafficking and function. Glycosylated. Post-translationally, sulfated. Sulfation on Tyr-385 plays a role in thyrotropin receptor binding and activation.

The protein localises to the cell membrane. It is found in the basolateral cell membrane. Functionally, receptor for the thyroid-stimulating hormone (TSH) or thyrotropin. Also acts as a receptor for the heterodimeric glycoprotein hormone (GPHA2:GPHB5) or thyrostimulin. The activity of this receptor is mediated by G proteins which activate adenylate cyclase. Plays a central role in controlling thyroid cell metabolism. This chain is Thyrotropin receptor (TSHR), found in Canis lupus familiaris (Dog).